A 2153-amino-acid polypeptide reads, in one-letter code: MEKYREIHQRVREIAPGTGSALDCMDLLDRLYAVRHDLVDQMIKHDWSDNKDVETPIGQVLLMAGVPNDIIQGMEKKIIPNSPTGQILKSFFKMTPDNFKITGNQIEFIEVTVTADVARGIREKRLKYESGLRFTEELLELEVKKGNLQQVYRISFNVVAVKTDGSNISTQWPSRRNEGVVQQMRLVQADINYVREHLIMQDERASLEAMFNLKFHVTGPRLRYFSIPDYRPQPLCNPTIDGLLQYCKQWLTEEHKFIFKEVSGTNVMGSFEVNEKKHKERYLESRKPRNFLLLQTTIQGSYLPSTISSDQCNTRIGCLEICKNIPETPVQALASDIAFKYISLDKDEVINYYNPRIHFKPGQNVKEPGTLKIGLSQMNPLSKAILDNIGKHKSDKGLFGQAIESINIASQIQLNECSKVIEQILSNLEINISDVSENIPLPKKTTCVDELLGKFYENEITKYMLGILRKTVAWHIGHLIRDITESLIAHSGLRRSKYWSVHAYDHGNVILFILPSKSLEVAGSYIRFFTVFKDGIGLVDNDNTDSKTEIDGITWIYSKVMSIDLNRLLALNIAFEKALLATATWFQYYTEDQGHFPLQHALRSVFSFHLLLCVSQKMKICAIFDNLRYLIPSVTSLYSGYELLIEKFFERPFKSALDVYLYSIIKSLLVSLAQNNKVRFYSKVRLLGLTVDQSTVGASGVYPSLMSRVVYKHYRSLISEATTCFFLFEKGLHGNLTEEAKIHLETVEWARKFNEKENRYGDILMKEGYTIELVENQNVTVEQQLFCQEVVELSAMELNKYLHAKSQVLCANIMNKHWDKPYFSQVRNISLKGMSGSLQEDGHLASSVTLIEAIRFLNSSQINPNVIDMYERTKHCKAQARIVRKYQRTEADRGFFITTLPTRVRLEIIEDYYDAIAKVVPEEYISYGGERKILNIQSALEKALRWASGISEIITSTGKKIRFKRKLMYVSADATKWSPGDNSAKFRRFTQAIYDGLNDDKLKCCVVDSLKNIYETEFFMSRKLHRYIDSMESKSEAVEDFLSFFSGGVSATVKGNWLQGNLNKCSSLFGVAVSLLFKRVWVELFPELECFFEFAHHSDDALFIYGYLEPEDDGTDWFMYVSQQIQAGHYHWHAVNQEMWKSMFNLHEQLLLMGSIRVSPKKTTVSPTNAEFLSTFFEGCAVSIPFIKILLGSLSDLPGLGFFDDLAASQSRCVKALDLGACPQLAQLAIVLCTSKVERLYGTADGMINSPISFLKVNKAHIPIALGGDGSMSIMELATAGIGMADKNILKKAFYSYKHTKRDGDRYILGLFKFLMSLSDDVFQHDRLGEFSFVGKVQWKVFTPKSEFEFYDQYSMTYLQAWSKQHPVYDYIIPRGRDNLLVYLVRKLNDPSIITAMTMQSPLQLRFRMQAKQHMKVCKLEGEWVTFREILAAADSFASTYQPNEKDLDLFNTLVSCTFSKEYAWKDFLNEVRCEVTTARHVHRPKVARTFTVREKDQVIQNPITSVIGYKYASTVDEISDVLDSAFFPDSLSADLQVMKEGVYRELGLDIGLPEVLKRIAPLLYKAGKSRIVIVEGNIEGTAESICSYWLKNMSLIKTIKVKPRKEVLKAVSLYGTKDNLSLQDDLAATRICIEVWRWCKANNQNVQEWFTALYFENQTLYDWIERFRRKGVVPVDPEIQCMALLLYDVLGFKNVLQMQANRRAYSGKQYDAYCVQTYNEETKLYEGDLRVTFNFGLDCARLEVFWDKKEYVLETSITQKHVLRLMMEEVSKELVRCGMRFKTEQVSHTRSLVLFKTESGFEWGKPNIPCIVYKHCALRTGLRTKHPINKEFMINIQSDGFRAIAQMDIESPRFLLAHAYHTLRDVRYQAVQAVGNVWFRTEQHKLFINPIISSGLLENFMKGLPAAIPPAAYSLIMNKAKISVDLFMFNELLALINKNNILDLSGIEETSEGYSTVTSMSSKQWSEEMSLMSDDDIDDDEEFTIALDDIDFEQVDLEEDIQHFLQDESAYVGDLLIQTEEVEVKRIRGVTRILEPVKLIKSWVSKGLAIDKVYNPVGILLMARYMSKNYDFHSVPLALMNPYDLTEFESVVKGWGETINDRFQEIDLEAQRLVREQNIQPEDILPDSLFSFRHVDVLLKRLFPRDPISSFY.

5 residues coordinate Mn(2+): H36, E54, D97, E110, and V111. The For endonuclease activity role is filled by K124. The RdRp catalytic domain maps to 957–1143; sequence TGKKIRFKRK…AVNQEMWKSM (187 aa). Residue D1100 participates in Mg(2+) binding.

Belongs to the Bunyavirales RNA polymerase family. Interacts with the viral nucleoprotein. Requires Mn(2+) as cofactor. Mg(2+) serves as cofactor.

It localises to the host cytoplasm. The protein resides in the host perinuclear region. The catalysed reaction is RNA(n) + a ribonucleoside 5'-triphosphate = RNA(n+1) + diphosphate. Its function is as follows. RNA-dependent RNA polymerase, which is responsible for the replication and transcription of the viral RNA genome using antigenomic RNA as an intermediate. During transcription, synthesizes subgenomic RNAs and assures their capping by a cap-snatching mechanism, which involves the endonuclease activity cleaving the host capped pre-mRNAs. These short capped RNAs are then used as primers for viral transcription. Cleaves ssRNA substrates but not DNA. Seems to downregulate the expression of its own and heterologous mRNAs through its endonuclease activity. This Black Creek Canal orthohantavirus (BCCV) protein is RNA-directed RNA polymerase L.